Reading from the N-terminus, the 199-residue chain is Large ribosomal subunit protein uL10 (199 aa).

It belongs to the universal ribosomal protein uL10 family. As to quaternary structure, part of the ribosomal stalk of the 50S ribosomal subunit. The N-terminus interacts with L11 and the large rRNA to form the base of the stalk. The C-terminus forms an elongated spine to which L12 dimers bind in a sequential fashion forming a multimeric L10(L12)X complex.

Functionally, forms part of the ribosomal stalk, playing a central role in the interaction of the ribosome with GTP-bound translation factors. This chain is Large ribosomal subunit protein uL10 (rplJ), found in Aquifex aeolicus (strain VF5).